The chain runs to 189 residues: Small ribosomal subunit protein uS4 (189 aa).

The S4 RNA-binding domain maps to 107–181 (RRLQTQVFKL…VKRRTLRKGD (75 aa)). A disordered region spans residues 161–189 (QSPYGGGRPGRVKRRTLRKGDGAGGDDEE).

It belongs to the universal ribosomal protein uS4 family. As to quaternary structure, component of the small ribosomal subunit. Part of the small subunit (SSU) processome, composed of more than 70 proteins and the RNA chaperone small nucleolar RNA (snoRNA) U3.

The protein localises to the cytoplasm. It localises to the nucleus. Its subcellular location is the nucleolus. Its function is as follows. Component of the small ribosomal subunit. The ribosome is a large ribonucleoprotein complex responsible for the synthesis of proteins in the cell. Part of the small subunit (SSU) processome, first precursor of the small eukaryotic ribosomal subunit. During the assembly of the SSU processome in the nucleolus, many ribosome biogenesis factors, an RNA chaperone and ribosomal proteins associate with the nascent pre-rRNA and work in concert to generate RNA folding, modifications, rearrangements and cleavage as well as targeted degradation of pre-ribosomal RNA by the RNA exosome. The chain is Small ribosomal subunit protein uS4 (rps-9) from Caenorhabditis elegans.